A 502-amino-acid chain; its full sequence is Cytochrome P450 CYP94D109 (502 aa).

A helical membrane pass occupies residues 3 to 23 (SLSLIFISFITLIVFLVVSAS). Cys437 contributes to the heme binding site.

It belongs to the cytochrome P450 family. Mainly expressed in leaves and, at low levels, in roots, fruits and stems.

It is found in the membrane. It functions in the pathway steroid metabolism; cholesterol metabolism. Its function is as follows. Involved in the biosynthesis of spiroketal steroid and saponin natural products from cholesterol such as diosgenin and analogs (e.g. furostanol and spirostanol), plant defense compounds used as main precursors for the industrial production of steroid hormones. During the 5,6-spiroketalization of cholesterol, may catalyze the 27-monohydroxylation of furostanol-type steroid to an intermediate product that undergoes a stereospecific formation of the terminal heterocycle to yield diosgenin. In Paris polyphylla (Daiswa polyphylla), this protein is Cytochrome P450 CYP94D109.